Consider the following 609-residue polypeptide: DNA mismatch repair protein MutL (609 aa).

The interval 364 to 386 (SVNSKPTDYRPAMSPSFKSTPNT) is disordered.

This sequence belongs to the DNA mismatch repair MutL/HexB family.

In terms of biological role, this protein is involved in the repair of mismatches in DNA. It is required for dam-dependent methyl-directed DNA mismatch repair. May act as a 'molecular matchmaker', a protein that promotes the formation of a stable complex between two or more DNA-binding proteins in an ATP-dependent manner without itself being part of a final effector complex. The polypeptide is DNA mismatch repair protein MutL (Rickettsia akari (strain Hartford)).